The sequence spans 69 residues: Putative membrane protein insertion efficiency factor (69 aa).

The protein belongs to the UPF0161 family.

It localises to the cell membrane. Could be involved in insertion of integral membrane proteins into the membrane. This Caldanaerobacter subterraneus subsp. tengcongensis (strain DSM 15242 / JCM 11007 / NBRC 100824 / MB4) (Thermoanaerobacter tengcongensis) protein is Putative membrane protein insertion efficiency factor.